A 1151-amino-acid chain; its full sequence is Ankyrin and IPT/TIG repeat-containing protein C26H5.05 (1151 aa).

Disordered stretches follow at residues 77–104, 452–511, and 516–535; these read NLPS…AECL, KSRN…ENSR, and QLSA…KSVE. The span at 87-98 shows a compositional bias: polar residues; that stretch reads SHASSPNLSNSQ. The segment covering 452–463 has biased composition (basic and acidic residues); sequence KSRNLTKSEKTG. 2 stretches are compositionally biased toward polar residues: residues 464–496 and 517–532; these read KSNS…SDNP and LSAS…STLK. The region spanning 658–739 is the IPT/TIG domain; it reads PLISRIIPNK…SSEAPVMFTY (82 aa). ANK repeat units follow at residues 861-890 and 894-923; these read SGRS…DVNK and LGYT…KPDV. A disordered region spans residues 1041–1067; it reads PPPYSEFADDTTAQAGSSKRDSAISED. The segment covering 1058 to 1067 has biased composition (basic and acidic residues); sequence SKRDSAISED. A helical transmembrane segment spans residues 1113 to 1133; that stretch reads MDFMLFSFWLPALLLLSIFGL.

The protein localises to the vacuole membrane. In Schizosaccharomyces pombe (strain 972 / ATCC 24843) (Fission yeast), this protein is Ankyrin and IPT/TIG repeat-containing protein C26H5.05.